The chain runs to 49 residues: Lysozyme C (49 aa).

Residues 1-49 (SKMKKCEFAKIAKEQHMDGYHGVSLADWVCLVNNESDFNTKAINRNKGI) form the C-type lysozyme domain. The active site involves glutamate 35.

The protein belongs to the glycosyl hydrolase 22 family. As to quaternary structure, monomer.

It localises to the secreted. It catalyses the reaction Hydrolysis of (1-&gt;4)-beta-linkages between N-acetylmuramic acid and N-acetyl-D-glucosamine residues in a peptidoglycan and between N-acetyl-D-glucosamine residues in chitodextrins.. In terms of biological role, lysozymes have primarily a bacteriolytic function; those in tissues and body fluids are associated with the monocyte-macrophage system and enhance the activity of immunoagents. This Pseudocheirus peregrinus (Common ring-tailed possum) protein is Lysozyme C (LYZ).